A 722-amino-acid polypeptide reads, in one-letter code: Glycine--tRNA ligase beta subunit (722 aa).

This sequence belongs to the class-II aminoacyl-tRNA synthetase family. As to quaternary structure, tetramer of two alpha and two beta subunits.

It is found in the cytoplasm. The catalysed reaction is tRNA(Gly) + glycine + ATP = glycyl-tRNA(Gly) + AMP + diphosphate. The chain is Glycine--tRNA ligase beta subunit from Haemophilus influenzae (strain 86-028NP).